The chain runs to 78 residues: Neurogranin (78 aa).

Met-1 carries the N-acetylmethionine modification. Cys-3 and Cys-51 are oxidised to a cystine. The 22-residue stretch at 26 to 47 (ANAAAAKIQASFRGHMARKKIK) folds into the IQ domain. Position 36 is a phosphoserine; by PHK and PKC (Ser-36). Residues 39–78 (GHMARKKIKSGECGRKGPGPGGPGGAGGARGGAGGGPSGD) are disordered. Residues 48–78 (SGECGRKGPGPGGPGGAGGARGGAGGGPSGD) enclose the Collagen-like domain. A compositionally biased stretch (gly residues) spans 54–78 (KGPGPGGPGGAGGARGGAGGGPSGD). Residue Arg-68 is modified to Citrulline; partial. Arg-68 is subject to Omega-N-methylarginine.

This sequence belongs to the neurogranin family. Interacts with apo-calmodulin; this interaction decreases the affinity of calmodulin for calcium ions. Disulfide bond formation is redox-sensitive. The cysteine residues are readily oxidized by several nitric acid (NO) donors and other oxidants to form intramolecular disulfide. Cys-51 can form a disulfide with any other of the cysteine residues with an order of reactivity Cys-9 &gt; Cys-4 &gt; Cys-3. In terms of processing, phosphorylated at Ser-36 by PHK and PKC, phosphorylation prevents interaction with Calmodulin and interrupts several learning- and memory-associated functions.

The protein resides in the cytoplasm. Its subcellular location is the synapse. The protein localises to the cell projection. It is found in the dendritic spine. Regulates the affinity of calmodulin for calcium. Involved in synaptic plasticity and spatial learning. The sequence is that of Neurogranin (Nrgn) from Mus musculus (Mouse).